The primary structure comprises 68 residues: Conotoxin PnMLKM-011 (68 aa).

The N-terminal stretch at 1–17 (MGVVLFIFLVLFPLATL) is a signal peptide. The propeptide occupies 18–51 (QLDPDQPVERYAENKQLLNPDERRGIILHALGQR). Disulfide bonds link Cys-53–Cys-65, Cys-54–Cys-63, and Cys-59–Cys-66. Position 67 is a leucine amide (Leu-67).

This sequence belongs to the conotoxin M superfamily. Expressed by the venom duct.

The protein localises to the secreted. This Conus pennaceus (Feathered cone) protein is Conotoxin PnMLKM-011.